The chain runs to 270 residues: Ribonuclease HII (270 aa).

In terms of domain architecture, RNase H type-2 spans 28 to 222 (RQVAGADEAG…VSGRQGAPPR (195 aa)). A divalent metal cation contacts are provided by aspartate 34, glutamate 35, and aspartate 128.

This sequence belongs to the RNase HII family. Mn(2+) is required as a cofactor. It depends on Mg(2+) as a cofactor.

It is found in the cytoplasm. The catalysed reaction is Endonucleolytic cleavage to 5'-phosphomonoester.. Functionally, endonuclease that specifically degrades the RNA of RNA-DNA hybrids. The polypeptide is Ribonuclease HII (Salinispora tropica (strain ATCC BAA-916 / DSM 44818 / JCM 13857 / NBRC 105044 / CNB-440)).